A 566-amino-acid polypeptide reads, in one-letter code: Glutamate--tRNA ligase (566 aa).

The 'HIGH' region motif lies at 93–103; it reads PNPDYTIHLGN.

This sequence belongs to the class-I aminoacyl-tRNA synthetase family. Glutamate--tRNA ligase type 2 subfamily.

The protein resides in the cytoplasm. The enzyme catalyses tRNA(Glu) + L-glutamate + ATP = L-glutamyl-tRNA(Glu) + AMP + diphosphate. Its function is as follows. Catalyzes the attachment of glutamate to tRNA(Glu) in a two-step reaction: glutamate is first activated by ATP to form Glu-AMP and then transferred to the acceptor end of tRNA(Glu). The chain is Glutamate--tRNA ligase from Staphylothermus marinus (strain ATCC 43588 / DSM 3639 / JCM 9404 / F1).